Consider the following 258-residue polypeptide: 5'-nucleotidase SurE (258 aa).

The a divalent metal cation site is built by D8, D9, S40, and N92.

It belongs to the SurE nucleotidase family. The cofactor is a divalent metal cation.

It localises to the cytoplasm. The enzyme catalyses a ribonucleoside 5'-phosphate + H2O = a ribonucleoside + phosphate. Functionally, nucleotidase that shows phosphatase activity on nucleoside 5'-monophosphates. This is 5'-nucleotidase SurE from Brucella anthropi (strain ATCC 49188 / DSM 6882 / CCUG 24695 / JCM 21032 / LMG 3331 / NBRC 15819 / NCTC 12168 / Alc 37) (Ochrobactrum anthropi).